The primary structure comprises 297 residues: Bifunctional protein FolD 1 (297 aa).

Residues 174 to 176 (GRS), serine 199, and isoleucine 240 each bind NADP(+).

The protein belongs to the tetrahydrofolate dehydrogenase/cyclohydrolase family. Homodimer.

The enzyme catalyses (6R)-5,10-methylene-5,6,7,8-tetrahydrofolate + NADP(+) = (6R)-5,10-methenyltetrahydrofolate + NADPH. It carries out the reaction (6R)-5,10-methenyltetrahydrofolate + H2O = (6R)-10-formyltetrahydrofolate + H(+). It participates in one-carbon metabolism; tetrahydrofolate interconversion. Functionally, catalyzes the oxidation of 5,10-methylenetetrahydrofolate to 5,10-methenyltetrahydrofolate and then the hydrolysis of 5,10-methenyltetrahydrofolate to 10-formyltetrahydrofolate. The chain is Bifunctional protein FolD 1 from Acinetobacter baylyi (strain ATCC 33305 / BD413 / ADP1).